A 1475-amino-acid polypeptide reads, in one-letter code: Sex-determining transformer protein 2 (1475 aa).

Positions 1 to 31 are cleaved as a signal peptide; it reads MKLKYNKLLVSVVIVTFVTFGLLLAECFGKS. 11 consecutive transmembrane segments (helical) span residues 446 to 466, 474 to 494, 496 to 516, 589 to 609, 737 to 757, 902 to 922, 928 to 948, 952 to 972, 979 to 999, 1034 to 1054, and 1060 to 1080; these read TIHFVVNVHSLIVILFTIFVW, AFMFFVRDALTCLLFCFVCST, GVIVLDTELIKYIIVLTLANL, WGCTSILIFPIVFVYWYFIDS, GVILCIPAILLIVISIGLLFI, AVGVLYEHYHRIAVVWNLFAF, AGIFIILLSIITFIFAITPTI, FLFSLLVVGTQIEVAALVHLF, IYTNLALFAGFLAAWDPFCAL, IAQFFVLLITAFSILAIICSI, and IFFVPTVILIVIQIVAVFNSI. An interaction with fem-3 region spans residues 1133–1273; the sequence is EFSIKRSSPP…RERNLMNKRS (141 aa). Disordered regions lie at residues 1142-1194 and 1267-1330; these read PCRY…GDNT and NLMN…VDEP. The span at 1178 to 1188 shows a compositional bias: basic residues; it reads RSPKTGNKRVR. Positions 1276–1310 are enriched in basic and acidic residues; it reads QRRESRNIEKMKKSQENLDKEKSEEKISESKKNQD. Residues 1392–1413 are MX regulatory domain; required for tra-1 binding; that stretch reads CEDIYWTHRTGQLPPGLQVPRR. A disordered region spans residues 1424–1475; that stretch reads TPPPEDLNWVPPAESPPIPIPQQAFDLLEERRRNHREQQDEAREGDLSDPEV. Residues 1451 to 1469 are compositionally biased toward basic and acidic residues; it reads LEERRRNHREQQDEAREGD.

Interacts with tra-1 and fem-3. Post-translationally, undergoes cleavage by tra-3 to produce a feminizing carboxy-terminal isoform Tra-2B. In terms of tissue distribution, somatic and germline tissues. Isoform Tra-2B is specific to oocytes.

It localises to the membrane. In terms of biological role, plays a major role in controlling sexual cell fates. Promotes female development in XX animals where it sequesters one or more of the FEM proteins to the membrane thereby freeing the tra-1 protein (a putative transcription factor) to enter the nucleus and promote female development. In XO animals it acts as a receptor for her-1 which prevents it from binding to FEM proteins thereby repressing the activity of tra-1. Negatively regulates male development when bound to fem-3 and is required together with tra-1 for promoting spermatogenesis. Also required for feminizing tra-3 activity. This Caenorhabditis elegans protein is Sex-determining transformer protein 2 (tra-2).